The chain runs to 407 residues: PWWP domain-containing protein 3 (407 aa).

Residues 1 to 46 (MMVARTRSQKRKLEEINNQKKIKTKKKATGQQTSNTKNLRDVKKKG) form a disordered region. Residues 63-129 (NGEYVLAKMS…SSNVLPLTVD (67 aa)) enclose the PWWP domain. Phosphoserine occurs at positions 160 and 162. The interval 163 to 248 (DVEEDEFEPE…PIPSPKKTAK (86 aa)) is disordered. The segment covering 172–208 (ENTRKKLQKPIEKPKKEKIEATPKIDGGKRLKNEKSS) has biased composition (basic and acidic residues). S236, S238, and S242 each carry phosphoserine.

In terms of assembly, component of the mst2 complex composed of at least eaf6, mst2, nto1, pdp3, ptf1, ptf2 and tfg3.

It localises to the nucleus. Component of the mst2 complex which is a highly specific H3 lysine 14 (H3K14) acetyltransferase that functions together with gcn5 to regulate global levels of H3K14 acetylation (H3K14ac), critical for DNA damage checkpoint activation. This is PWWP domain-containing protein 3 (pdp3) from Schizosaccharomyces pombe (strain 972 / ATCC 24843) (Fission yeast).